A 399-amino-acid polypeptide reads, in one-letter code: S-adenosylmethionine synthase (399 aa).

His-17 contributes to the ATP binding site. Asp-19 contributes to the Mg(2+) binding site. Glu-45 is a binding site for K(+). Residues Glu-58 and Gln-101 each contribute to the L-methionine site. A flexible loop region spans residues 101–111 (QSPDIAQGVDE). ATP is bound by residues 177–179 (DAK), 244–245 (RF), Asp-253, 259–260 (RK), Ala-276, and Lys-280. Asp-253 is a binding site for L-methionine. Residue Lys-284 participates in L-methionine binding.

The protein belongs to the AdoMet synthase family. Homotetramer; dimer of dimers. Mg(2+) serves as cofactor. The cofactor is K(+).

The protein resides in the cytoplasm. The catalysed reaction is L-methionine + ATP + H2O = S-adenosyl-L-methionine + phosphate + diphosphate. The protein operates within amino-acid biosynthesis; S-adenosyl-L-methionine biosynthesis; S-adenosyl-L-methionine from L-methionine: step 1/1. In terms of biological role, catalyzes the formation of S-adenosylmethionine (AdoMet) from methionine and ATP. The overall synthetic reaction is composed of two sequential steps, AdoMet formation and the subsequent tripolyphosphate hydrolysis which occurs prior to release of AdoMet from the enzyme. The sequence is that of S-adenosylmethionine synthase from Listeria monocytogenes serovar 1/2a (strain ATCC BAA-679 / EGD-e).